Here is a 106-residue protein sequence, read N- to C-terminus: Iron-sulfur cluster assembly protein CyaY (106 aa).

Belongs to the frataxin family.

Functionally, involved in iron-sulfur (Fe-S) cluster assembly. May act as a regulator of Fe-S biogenesis. The sequence is that of Iron-sulfur cluster assembly protein CyaY from Shigella flexneri.